The chain runs to 375 residues: Aminomethyltransferase (375 aa).

It belongs to the GcvT family. In terms of assembly, the glycine cleavage system is composed of four proteins: P, T, L and H.

The catalysed reaction is N(6)-[(R)-S(8)-aminomethyldihydrolipoyl]-L-lysyl-[protein] + (6S)-5,6,7,8-tetrahydrofolate = N(6)-[(R)-dihydrolipoyl]-L-lysyl-[protein] + (6R)-5,10-methylene-5,6,7,8-tetrahydrofolate + NH4(+). In terms of biological role, the glycine cleavage system catalyzes the degradation of glycine. The chain is Aminomethyltransferase from Cupriavidus taiwanensis (strain DSM 17343 / BCRC 17206 / CCUG 44338 / CIP 107171 / LMG 19424 / R1) (Ralstonia taiwanensis (strain LMG 19424)).